The sequence spans 1156 residues: DNA-directed RNA polymerase 133 kDa polypeptide (1156 aa).

This sequence belongs to the RNA polymerase beta chain family. The DNA-dependent RNA polymerase used for intermediate and late genes expression consists of eight subunits 147 kDa, 133 kDa, 35 kDa, 30 kDa, 22 kDa, 19 kDa, 18 kDa and 7 kDa totalling more than 500 kDa in mass. The same holoenzyme, with the addition of the transcription-specificity factor RAP94, is used for early gene expression.

The protein localises to the virion. It carries out the reaction RNA(n) + a ribonucleoside 5'-triphosphate = RNA(n+1) + diphosphate. In terms of biological role, part of the DNA-dependent RNA polymerase which catalyzes the transcription of viral DNA into RNA using the four ribonucleoside triphosphates as substrates. Responsible for the transcription of early, intermediate and late genes. DNA-dependent RNA polymerase associates with the early transcription factor (ETF), itself composed of D6 and A7, thereby allowing the early genes transcription. Late transcription, and probably also intermediate transcription, require newly synthesized RNA polymerase. This Homo sapiens (Human) protein is DNA-directed RNA polymerase 133 kDa polypeptide (RPO132).